The sequence spans 226 residues: 3-isopropylmalate dehydratase small subunit (226 aa).

The interval Glu-204–Arg-226 is disordered.

It belongs to the LeuD family. LeuD type 1 subfamily. In terms of assembly, heterodimer of LeuC and LeuD.

It carries out the reaction (2R,3S)-3-isopropylmalate = (2S)-2-isopropylmalate. It participates in amino-acid biosynthesis; L-leucine biosynthesis; L-leucine from 3-methyl-2-oxobutanoate: step 2/4. Functionally, catalyzes the isomerization between 2-isopropylmalate and 3-isopropylmalate, via the formation of 2-isopropylmaleate. The protein is 3-isopropylmalate dehydratase small subunit of Bifidobacterium animalis subsp. lactis (strain AD011).